We begin with the raw amino-acid sequence, 861 residues long: Leucine--tRNA ligase (861 aa).

The 'HIGH' region signature appears at 42 to 52; that stretch reads PYPSGKLHMGH. The 'KMSKS' region signature appears at 618 to 622; it reads KMSKS. Lysine 621 contributes to the ATP binding site.

Belongs to the class-I aminoacyl-tRNA synthetase family.

The protein localises to the cytoplasm. It carries out the reaction tRNA(Leu) + L-leucine + ATP = L-leucyl-tRNA(Leu) + AMP + diphosphate. In Buchnera aphidicola subsp. Baizongia pistaciae (strain Bp), this protein is Leucine--tRNA ligase.